Consider the following 291-residue polypeptide: Oxidative stress-responsive serine-rich protein 1 (291 aa).

Residues 44–139 (RTTVDDTKPK…STGENSTSLD (96 aa)) form a disordered region. Residues 65–83 (STRKSSRGAVRIQRRRRSK) show a composition bias toward basic residues. 2 stretches are compositionally biased toward polar residues: residues 95-113 (CSTT…SQTE) and 127-139 (KEFS…TSLD). The residue at position 143 (Thr-143) is a Phosphothreonine.

Ubiquitous with high level in testis, placenta and cardiac myocytes. As to expression, expressed in testis, unpreganant uterus and cardiac myocytes.

The chain is Oxidative stress-responsive serine-rich protein 1 (Oser1) from Rattus norvegicus (Rat).